Reading from the N-terminus, the 189-residue chain is Myb-like protein T (189 aa).

The 52-residue stretch at 121 to 172 (NWSPDEQKALMVEVSTLGNKSEINWFFISQQLFLKGISRNARECQRKHESIQ) folds into the Myb-like domain.

The protein is Myb-like protein T (mybT) of Dictyostelium discoideum (Social amoeba).